The following is a 347-amino-acid chain: NADH-ubiquinone oxidoreductase chain 2 (347 aa).

Helical transmembrane passes span 3 to 23 (PIIF…VMIS), 25 to 45 (HWLL…PIMM), 67 to 87 (SMLL…WTVM), 96 to 116 (MLMT…FWVP), 122 to 142 (IPLS…MSVL), 145 to 165 (IFPS…ILIG), 178 to 198 (IMAY…PYNP), 200 to 220 (MTLL…TMFM), 239 to 259 (IMTV…PLSG), 274 to 294 (NSII…YFYM), and 325 to 345 (FLPT…MLSV).

Belongs to the complex I subunit 2 family. As to quaternary structure, core subunit of respiratory chain NADH dehydrogenase (Complex I) which is composed of 45 different subunits. Interacts with TMEM242.

The protein localises to the mitochondrion inner membrane. It carries out the reaction a ubiquinone + NADH + 5 H(+)(in) = a ubiquinol + NAD(+) + 4 H(+)(out). In terms of biological role, core subunit of the mitochondrial membrane respiratory chain NADH dehydrogenase (Complex I) which catalyzes electron transfer from NADH through the respiratory chain, using ubiquinone as an electron acceptor. Essential for the catalytic activity and assembly of complex I. The protein is NADH-ubiquinone oxidoreductase chain 2 of Bos indicus (Zebu).